The chain runs to 487 residues: MEANKTTEGPQDTQDAKEQPSLEDTNAEDLYEATTHETPLQPSSSQKHFQPPEIHLETPASLNPDTKGAEGLQDSSVSGTPPVKSSSSGLLSLPPQLSPQSVTSLEKAIAEIPLEEFGYDSPISKVKEEPLQLSPTANIPEYGSPISEVQKESLEVSPTANIPEYGSPISEVQKEPLEVSSTANIPKYESPVSEVQKEPLEVSPTASIPESSHELTSDKVPQTQVPESEHFPKHSFSESPTQAKEDESTKEGEAGEDELAVGTSKIPAAKPGLRAKKKKEKRAGGVTSRPVVPAKRAELVEMAKAVHREQFDDQVNNLFQWEKDSTLKAIQTGIYIGWRCPHYLWDCFRIGDESKCFCGHLLREHQIISDLSVPCSVSQCRCLMFCFIPSRPEEVGEFWLKKRATFDPKAWRAQCRCKHTHEEHAATGAHPCRHRGCFCPSFESNFLCVACDRRWEEHETFFETGDTRRKGKRPYGANNIKNWHRTY.

Polar residues-rich tracts occupy residues 1-13 and 36-48; these read MEANKTTEGPQDT and HETPLQPSSSQKH. 2 disordered regions span residues 1–103 and 132–289; these read MEAN…QSVT and QLSP…VTSR. Residues 81–103 show a composition bias toward low complexity; that stretch reads PPVKSSSSGLLSLPPQLSPQSVT. Basic and acidic residues-rich tracts occupy residues 227–236 and 243–253; these read ESEHFPKHSF and AKEDESTKEGE. Serine 248 carries the post-translational modification Phosphoserine.

Belongs to the FAM221 family.

This is Protein FAM221B (Fam221b) from Mus musculus (Mouse).